The following is a 122-amino-acid chain: Small ribosomal subunit protein uS13 (122 aa).

A disordered region spans residues 95 to 122; the sequence is GLPVRGQRTHTNARTRKGKAKPIAGKKK.

This sequence belongs to the universal ribosomal protein uS13 family. In terms of assembly, part of the 30S ribosomal subunit. Forms a loose heterodimer with protein S19. Forms two bridges to the 50S subunit in the 70S ribosome.

Functionally, located at the top of the head of the 30S subunit, it contacts several helices of the 16S rRNA. In the 70S ribosome it contacts the 23S rRNA (bridge B1a) and protein L5 of the 50S subunit (bridge B1b), connecting the 2 subunits; these bridges are implicated in subunit movement. Contacts the tRNAs in the A and P-sites. The sequence is that of Small ribosomal subunit protein uS13 from Zymomonas mobilis subsp. mobilis (strain ATCC 31821 / ZM4 / CP4).